The primary structure comprises 446 residues: MAERQQSPAAETIPGTPVIREVRTGTGSENFNPENTRRGCLRAEIDISPQLYGGRGFWVPFNLEDNYDCVGEFDIKRMEEQTVELEKDLIMKELETLDLLEALGSTKRIFEDLKWQLQQQALRCKETPQHLRSHSKEMVDEHCHRNPLKSPDLMTMEMKQAGMNLCKTMDDLALIHSYAESLNMKTKEEKDVLGVASLAEELNSLKFKPAGPDQVERFNTENLPVNPQCEQIKMVVETYDTAFHKQSKTCPRTADMRLVAARKMEEAARAAEALALAEMTILSSRRNQDALCFPKTPCFPLTLKAQMNKELSTNVSRIEILRKLEEANEEVKQSKQALEVALNRVEIASVKQLEAEEAFRQWNIESWKDQKAVGAKRSMKRESFPQRSFLSHINQHEPLIDLPEPMLKRNVSMGNALNRKDEKQLVTPRRKFRFIQTHQASIRKTE.

Residues 313–349 (TNVSRIEILRKLEEANEEVKQSKQALEVALNRVEIAS) adopt a coiled-coil conformation.

Belongs to the WEB family.

This is WEB family protein At3g56270 from Arabidopsis thaliana (Mouse-ear cress).